Here is a 490-residue protein sequence, read N- to C-terminus: Cytochrome P450 71D11 (490 aa).

Residue cysteine 427 participates in heme binding.

It belongs to the cytochrome P450 family. Heme serves as cofactor.

This chain is Cytochrome P450 71D11 (CYP71D11), found in Lotus japonicus (Lotus corniculatus var. japonicus).